We begin with the raw amino-acid sequence, 1051 residues long: Protein transport protein Sec16B (1051 aa).

Residues Met1 to Leu23 show a composition bias toward polar residues. Positions Met1–Pro109 are disordered. Residues Asp39–Gln63 are compositionally biased toward basic and acidic residues. Positions Ser64 to Val77 are enriched in polar residues. 2 positions are modified to phosphoserine: Ser70 and Ser137. A disordered region spans residues Glu157 to Lys203. Residues Phe163–Asn177 show a composition bias toward polar residues. 3 positions are modified to phosphoserine: Ser182, Ser185, and Ser245. Residues Ala263–Thr708 form a central conserved domain (CCD); required for localization to endoplasmic reticulum exit sites region. Residues Leu703–Asp715 show a composition bias toward basic and acidic residues. Disordered stretches follow at residues Leu703 to Thr754, Ser798 to Leu820, and Thr850 to Cys1051. Residues Gly737–Thr754 are compositionally biased toward polar residues. The segment covering Ser798 to Gly809 has biased composition (low complexity). A Phosphothreonine modification is found at Thr850. A phosphoserine mark is found at Ser860, Ser863, Ser866, Ser874, and Ser875. The span at Gly877–Asn897 shows a compositional bias: basic and acidic residues. Residues Ser900–Ser920 are compositionally biased toward low complexity. Residues Gly921–Glu932 show a composition bias toward acidic residues. The segment covering Arg936–Leu947 has biased composition (low complexity). Residues Glu984–Gly993 are compositionally biased toward gly residues. Residues Asn1022–Arg1037 are compositionally biased toward polar residues.

Belongs to the SEC16 family. In terms of assembly, SEC16A and SEC16B are each present in multiple copies in a heteromeric complex. Interacts with TFG. Interacts with SEC13. As to expression, liver.

It localises to the endoplasmic reticulum membrane. It is found in the golgi apparatus membrane. Functionally, plays a role in the organization of the endoplasmic reticulum exit sites (ERES), also known as transitional endoplasmic reticulum (tER). Required for secretory cargo traffic from the endoplasmic reticulum to the Golgi apparatus. Involved in peroxisome biogenesis. Regulates the transport of peroxisomal biogenesis factors PEX3 and PEX16 from the ER to peroxisomes. This chain is Protein transport protein Sec16B (Sec16b), found in Mus musculus (Mouse).